A 144-amino-acid chain; its full sequence is Large ribosomal subunit protein uL15 (144 aa).

The tract at residues 1–48 (MIKLECLQDPSPRKRRTKLLGRGPSSGHGKTSGRGHKGDGSRSGYKRR) is disordered.

The protein belongs to the universal ribosomal protein uL15 family. As to quaternary structure, part of the 50S ribosomal subunit.

In terms of biological role, binds to the 23S rRNA. The chain is Large ribosomal subunit protein uL15 from Chlamydia trachomatis serovar L2 (strain ATCC VR-902B / DSM 19102 / 434/Bu).